Here is a 597-residue protein sequence, read N- to C-terminus: Cytosolic phospholipase A2 gamma (597 aa).

Residues 1–597 enclose the PLA2c domain; it reads MELSSGVCPA…FKKSHNISKD (597 aa). Catalysis depends on Ser-83, which acts as the Nucleophile. The active-site Proton acceptor is Asp-417. Residues 576 to 597 form a disordered region; the sequence is RVKDPQGSQTVEFKKSHNISKD. Basic and acidic residues predominate over residues 587–597; sequence EFKKSHNISKD.

In terms of tissue distribution, highly expressed in ovary, where it localizes to oocytes in preantral and antral stage follicles (at protein level). Not detected in other tissues tested.

It is found in the nucleus. It localises to the nucleoplasm. The protein localises to the nucleus envelope. Its subcellular location is the cytoplasm. The protein resides in the cell cortex. It is found in the cytoskeleton. It localises to the spindle. It catalyses the reaction a 1,2-diacyl-sn-glycero-3-phosphocholine + H2O = a 1-acyl-sn-glycero-3-phosphocholine + a fatty acid + H(+). The catalysed reaction is a 1-O-alkyl-2-acyl-sn-glycero-3-phosphocholine + H2O = a 1-O-alkyl-sn-glycero-3-phosphocholine + a fatty acid + H(+). The enzyme catalyses 1,2-dihexadecanoyl-sn-glycero-3-phosphocholine + H2O = 1-hexadecanoyl-sn-glycero-3-phosphocholine + hexadecanoate + H(+). It carries out the reaction 1-hexadecanoyl-2-(9Z-octadecenoyl)-sn-glycero-3-phosphocholine + H2O = 1-hexadecanoyl-sn-glycero-3-phosphocholine + (9Z)-octadecenoate + H(+). It catalyses the reaction 1-hexadecanoyl-2-(9Z,12Z-octadecadienoyl)-sn-glycero-3-phosphocholine + H2O = (9Z,12Z)-octadecadienoate + 1-hexadecanoyl-sn-glycero-3-phosphocholine + H(+). The catalysed reaction is 1-hexadecanoyl-2-(5Z,8Z,11Z,14Z-eicosatetraenoyl)-sn-glycero-3-phosphocholine + H2O = 1-hexadecanoyl-sn-glycero-3-phosphocholine + (5Z,8Z,11Z,14Z)-eicosatetraenoate + H(+). The enzyme catalyses 1-O-hexadecyl-2-(5Z,8Z,11Z,14Z)-eicosatetraenoyl-sn-glycero-3-phosphocholine + H2O = 1-O-hexadecyl-sn-glycero-3-phosphocholine + (5Z,8Z,11Z,14Z)-eicosatetraenoate + H(+). It carries out the reaction 1-hexadecanoyl-2-(5Z,8Z,11Z,14Z-eicosatetraenoyl)-sn-glycero-3-phosphocholine + H2O = 2-(5Z,8Z,11Z,14Z)-eicosatetraenoyl-sn-glycero-3-phosphocholine + hexadecanoate + H(+). It catalyses the reaction a 1-acyl-sn-glycero-3-phosphocholine + H2O = sn-glycerol 3-phosphocholine + a fatty acid + H(+). The catalysed reaction is 1-hexadecanoyl-sn-glycero-3-phosphocholine + H2O = sn-glycerol 3-phosphocholine + hexadecanoate + H(+). The enzyme catalyses 2 1-hexadecanoyl-sn-glycero-3-phosphocholine = 1,2-dihexadecanoyl-sn-glycero-3-phosphocholine + sn-glycerol 3-phosphocholine. It carries out the reaction 1-hexadecanoyl-sn-glycero-3-phosphoethanolamine + 1-hexadecanoyl-sn-glycero-3-phosphocholine = 1,2-dihexadecanoyl-sn-glycero-3-phosphoethanolamine + sn-glycerol 3-phosphocholine. It catalyses the reaction 1-hexadecanoyl-sn-glycero-3-phosphoethanolamine + 1-hexadecanoyl-sn-glycero-3-phosphocholine = sn-glycero-3-phosphoethanolamine + 1,2-dihexadecanoyl-sn-glycero-3-phosphocholine. The catalysed reaction is 2 1-hexadecanoyl-sn-glycero-3-phosphoethanolamine = 1,2-dihexadecanoyl-sn-glycero-3-phosphoethanolamine + sn-glycero-3-phosphoethanolamine. The enzyme catalyses 1-O-hexadecyl-sn-glycero-3-phosphocholine + 1-hexadecanoyl-sn-glycero-3-phosphocholine = 1-O-hexadecyl-2-hexadecanoyl-sn-glycero-3-phosphocholine + sn-glycerol 3-phosphocholine. It carries out the reaction a 1-O-(1Z-alkenyl)-sn-glycero-3-phosphoethanolamine + 1-hexadecanoyl-sn-glycero-3-phosphocholine = 1-O-(1Z)-alkenyl-2-hexadecanoyl-sn-glycero-3-phosphoethanolamine + sn-glycerol 3-phosphocholine. It catalyses the reaction 1-O-hexadecyl-sn-glycero-3-phosphocholine + 1-hexadecanoyl-sn-glycero-3-phosphoethanolamine = 1-O-hexadecyl-2-hexadecanoyl-sn-glycero-3-phosphocholine + sn-glycero-3-phosphoethanolamine. The catalysed reaction is 1-octadecanoyl-2-(5Z,8Z,11Z,14Z)-eicosatetraenoyl-sn-glycero-3-phosphoethanolamine + 1-hexadecanoyl-sn-glycero-3-phosphocholine = 1-octadecanoyl-sn-glycero-3-phosphoethanolamine + 1-hexadecanoyl-2-(5Z,8Z,11Z,14Z-eicosatetraenoyl)-sn-glycero-3-phosphocholine. The enzyme catalyses 1-octadecanoyl-2-(5Z,8Z,11Z,14Z)-eicosatetraenoyl-sn-glycero-3-phosphoethanolamine + 1-O-hexadecyl-sn-glycero-3-phosphocholine = 1-octadecanoyl-sn-glycero-3-phosphoethanolamine + 1-O-hexadecyl-2-(5Z,8Z,11Z,14Z)-eicosatetraenoyl-sn-glycero-3-phosphocholine. It carries out the reaction 1-hexadecanoyl-2-(9Z,12Z-octadecadienoyl)-sn-glycero-3-phosphocholine + a 1-O-(1Z-alkenyl)-sn-glycero-3-phosphoethanolamine = 1-O-(1Z-alkenyl)-2-(9Z,12Z-octadecadienoyl)-sn-glycero-3-phosphoethanolamine + 1-hexadecanoyl-sn-glycero-3-phosphocholine. It catalyses the reaction 1-hexadecanoyl-2-(5Z,8Z,11Z,14Z-eicosatetraenoyl)-sn-glycero-3-phosphocholine + a 1-O-(1Z-alkenyl)-sn-glycero-3-phosphoethanolamine = 1-O-(1Z)-alkenyl-2-(5Z,8Z,11Z,14Z)-eicosatetraenoyl-sn-glycero-3-phosphoethanolamine + 1-hexadecanoyl-sn-glycero-3-phosphocholine. In terms of biological role, calcium-independent phospholipase, lysophospholipase and O-acyltransferase involved in phospholipid remodeling. Preferentially hydrolyzes the ester bond of the fatty acyl group attached at sn-2 position of phospholipids with choline and ethanolamine head groups, producing lysophospholipids that are used in deacylation-reacylation cycles. Transfers the sn-1 fatty acyl from one lysophospholipid molecule to the sn-2 position of another lysophospholipid to form diacyl, alkylacyl and alkenylacyl glycerophospholipids. Cleaves ester bonds but not alkyl or alkenyl ether bonds at the sn-1 position of lysophospholipids. Catalyzes sn-2 fatty acyl transfer from phospholipids to the sn-2 position of 1-O-alkyl or 1-O-alkenyl lysophospholipids with lower efficiency. The polypeptide is Cytosolic phospholipase A2 gamma (Mus musculus (Mouse)).